A 139-amino-acid chain; its full sequence is Large ribosomal subunit protein uL13c (139 aa).

Belongs to the universal ribosomal protein uL13 family. As to quaternary structure, part of the 50S ribosomal subunit.

The protein localises to the plastid. It localises to the chloroplast. This is Large ribosomal subunit protein uL13c from Trieres chinensis (Marine centric diatom).